Reading from the N-terminus, the 125-residue chain is Small ribosomal subunit protein uS13 (125 aa).

The segment at 92–125 (RRSLPVRGQNTQTNARTRKGKRKTVAGKKKAARK) is disordered. The span at 107–125 (RTRKGKRKTVAGKKKAARK) shows a compositional bias: basic residues.

It belongs to the universal ribosomal protein uS13 family. In terms of assembly, part of the 30S ribosomal subunit. Forms a loose heterodimer with protein S19. Forms two bridges to the 50S subunit in the 70S ribosome.

Functionally, located at the top of the head of the 30S subunit, it contacts several helices of the 16S rRNA. In the 70S ribosome it contacts the 23S rRNA (bridge B1a) and protein L5 of the 50S subunit (bridge B1b), connecting the 2 subunits; these bridges are implicated in subunit movement. Contacts the tRNAs in the A and P-sites. In Chlorobium luteolum (strain DSM 273 / BCRC 81028 / 2530) (Pelodictyon luteolum), this protein is Small ribosomal subunit protein uS13.